We begin with the raw amino-acid sequence, 263 residues long: Hydroxyacylglutathione hydrolase (263 aa).

Residues His-60, His-62, Asp-64, His-65, His-120, Asp-137, and His-175 each contribute to the Zn(2+) site.

Belongs to the metallo-beta-lactamase superfamily. Glyoxalase II family. As to quaternary structure, monomer. The cofactor is Zn(2+).

It carries out the reaction an S-(2-hydroxyacyl)glutathione + H2O = a 2-hydroxy carboxylate + glutathione + H(+). It functions in the pathway secondary metabolite metabolism; methylglyoxal degradation; (R)-lactate from methylglyoxal: step 2/2. Thiolesterase that catalyzes the hydrolysis of S-D-lactoyl-glutathione to form glutathione and D-lactic acid. The polypeptide is Hydroxyacylglutathione hydrolase (Shewanella pealeana (strain ATCC 700345 / ANG-SQ1)).